The following is a 183-amino-acid chain: Dual-action ribosomal maturation protein DarP (183 aa).

It belongs to the DarP family.

Its subcellular location is the cytoplasm. Its function is as follows. Member of a network of 50S ribosomal subunit biogenesis factors which assembles along the 30S-50S interface, preventing incorrect 23S rRNA structures from forming. Promotes peptidyl transferase center (PTC) maturation. In Escherichia coli O81 (strain ED1a), this protein is Dual-action ribosomal maturation protein DarP.